Reading from the N-terminus, the 965-residue chain is Valine--tRNA ligase (965 aa).

Positions 1-22 (MENTPSHINKTEPSLDKTYSPQ) are disordered. A 'HIGH' region motif is present at residues 56–66 (PNVTGSLHMGH). The 'KMSKS' region signature appears at 568–572 (KMSKS). K571 contributes to the ATP binding site. Positions 896 to 965 (LIDKATELDR…IEQQATIAAL (70 aa)) form a coiled coil.

The protein belongs to the class-I aminoacyl-tRNA synthetase family. ValS type 1 subfamily. In terms of assembly, monomer.

The protein resides in the cytoplasm. The enzyme catalyses tRNA(Val) + L-valine + ATP = L-valyl-tRNA(Val) + AMP + diphosphate. Catalyzes the attachment of valine to tRNA(Val). As ValRS can inadvertently accommodate and process structurally similar amino acids such as threonine, to avoid such errors, it has a 'posttransfer' editing activity that hydrolyzes mischarged Thr-tRNA(Val) in a tRNA-dependent manner. The polypeptide is Valine--tRNA ligase (Yersinia pseudotuberculosis serotype I (strain IP32953)).